The primary structure comprises 187 residues: MNETQIQRETRQVVEDVLEKTNLKQGALFVLGLSSSEVLGGQIGKESSQEIGELIVETILGILGSRGIHLAVQGCEHVNRALVVERQVAEQFDLEIVSVHPTLHAGGSGQLAAFKFMQDPVEVEFIKAHAGLDIGDTAIGMHVKHVQVPIRPILREIGHAHVTALASRPKLIGGARAHYPQDAIRKS.

Belongs to the UPF0340 family.

The protein is UPF0340 protein SPG_0604 of Streptococcus pneumoniae serotype 19F (strain G54).